Reading from the N-terminus, the 547-residue chain is Chaperonin GroEL (547 aa).

Residues 30–33 (TLGP), Lys-51, 87–91 (DGTTT), Gly-415, 479–481 (NAA), and Asp-495 contribute to the ATP site. Residues 525–547 (PKEDSPGAGAGMGGMGGMGGMDM) are disordered. Gly residues predominate over residues 532–547 (AGAGMGGMGGMGGMDM).

This sequence belongs to the chaperonin (HSP60) family. As to quaternary structure, forms a cylinder of 14 subunits composed of two heptameric rings stacked back-to-back. Interacts with the co-chaperonin GroES.

The protein localises to the cytoplasm. The enzyme catalyses ATP + H2O + a folded polypeptide = ADP + phosphate + an unfolded polypeptide.. Functionally, together with its co-chaperonin GroES, plays an essential role in assisting protein folding. The GroEL-GroES system forms a nano-cage that allows encapsulation of the non-native substrate proteins and provides a physical environment optimized to promote and accelerate protein folding. This chain is Chaperonin GroEL, found in Nitrosomonas eutropha (strain DSM 101675 / C91 / Nm57).